A 394-amino-acid polypeptide reads, in one-letter code: Elongation factor Tu (394 aa).

In terms of domain architecture, tr-type G spans 10–204 (KPHVNVGTIG…AMDDYIPAPE (195 aa)). Residues 19–26 (GHVDHGKT) form a G1 region. 19–26 (GHVDHGKT) is a GTP binding site. Thr26 is a binding site for Mg(2+). Residues 60-64 (GITIN) form a G2 region. The segment at 81-84 (DCPG) is G3. GTP is bound by residues 81-85 (DCPGH) and 136-139 (NKCD). Positions 136–139 (NKCD) are G4. Residues 174–176 (SAL) form a G5 region.

Belongs to the TRAFAC class translation factor GTPase superfamily. Classic translation factor GTPase family. EF-Tu/EF-1A subfamily. In terms of assembly, monomer.

It localises to the cytoplasm. The catalysed reaction is GTP + H2O = GDP + phosphate + H(+). Its function is as follows. GTP hydrolase that promotes the GTP-dependent binding of aminoacyl-tRNA to the A-site of ribosomes during protein biosynthesis. The sequence is that of Elongation factor Tu from Francisella tularensis subsp. holarctica (strain FTNF002-00 / FTA).